Reading from the N-terminus, the 357-residue chain is MGNRSAADADGLLAGRGPGTGGGAGSPGAAAALVGGVLLIGAVLAGNALVCVSVAAERALQTPTNYFIVSLAAADLLLALLVLPLFVYSEVQGGVWQFSPGLCDALMAMDVMLCTASIFNLCAISADRFVAVAVPLSYNRQSGGGRQLLLIGATWLLSAAVAAPVLCGLNDARGRDPAVCRLEDRDYVVYSSVCSFFLPCPVMLLLYWATFRGLRRWEAARRTKLHGRRPRRPSGPGPPPPEAVETPEAPEAIPTPDATLAEPALPASEERRAKITGRERKAMRVLPVVVGAFLVCWTPFFVVHITGALCPACAVPPRLVSAVTWLGYVNSALNPLIYTVFNAEFRAVFRKALRLCC.

Topologically, residues 1–32 (MGNRSAADADGLLAGRGPGTGGGAGSPGAAAA) are extracellular. The N-linked (GlcNAc...) asparagine glycan is linked to asparagine 3. Residues 33-55 (LVGGVLLIGAVLAGNALVCVSVA) form a helical membrane-spanning segment. The Cytoplasmic portion of the chain corresponds to 56 to 65 (AERALQTPTN). The helical transmembrane segment at 66–88 (YFIVSLAAADLLLALLVLPLFVY) threads the bilayer. Na(+) is bound at residue aspartate 75. Residues 89-104 (SEVQGGVWQFSPGLCD) lie on the Extracellular side of the membrane. Cysteine 103 and cysteine 180 are oxidised to a cystine. Residues 105 to 126 (ALMAMDVMLCTASIFNLCAISA) form a helical membrane-spanning segment. Serine 117 is a binding site for Na(+). The Cytoplasmic segment spans residues 127 to 146 (DRFVAVAVPLSYNRQSGGGR). The helical transmembrane segment at 147 to 170 (QLLLIGATWLLSAAVAAPVLCGLN) threads the bilayer. Residues 171–186 (DARGRDPAVCRLEDRD) lie on the Extracellular side of the membrane. Residues 187-208 (YVVYSSVCSFFLPCPVMLLLYW) form a helical membrane-spanning segment. Topologically, residues 209–284 (ATFRGLRRWE…ITGRERKAMR (76 aa)) are cytoplasmic. A disordered region spans residues 225–261 (LHGRRPRRPSGPGPPPPEAVETPEAPEAIPTPDATLA). Residues 233 to 242 (PSGPGPPPPE) show a composition bias toward pro residues. Residues 243–259 (AVETPEAPEAIPTPDAT) show a composition bias toward low complexity. A helical transmembrane segment spans residues 285–307 (VLPVVVGAFLVCWTPFFVVHITG). The Extracellular segment spans residues 308–316 (ALCPACAVP). Cysteine 310 and cysteine 313 form a disulfide bridge. The helical transmembrane segment at 317 to 339 (PRLVSAVTWLGYVNSALNPLIYT) threads the bilayer. At 340–357 (VFNAEFRAVFRKALRLCC) the chain is on the cytoplasmic side. The S-palmitoyl cysteine moiety is linked to residue cysteine 357.

It belongs to the G-protein coupled receptor 1 family. Forms homo- and heterooligomers with DRD2. D4.7 allele exhibits higher affinity for homodimers compared to DRD2 heterodimers, while alleles D42. and 4.4 have similar affinities for both. The interaction with DRD2 may modulate agonist-induced downstream signaling. Interacts with CLIC6. Interacts with GPRASP1. May interact with ADORA2A. Interacts with KLHL12. In terms of processing, polyubiquitinated by the BCR(KLHL12) E3 ubiquitin ligase complex: polyubiquitination does not lead to degradation of DRD4 protein. Post-translationally, palmitoylated. Palmitoylation of the C-terminal Cys is important for normal expression at the cell membrane.

The protein resides in the cell membrane. In terms of biological role, dopamine receptor responsible for neuronal signaling in the mesolimbic system of the brain, an area of the brain that regulates emotion and complex behavior. Activated by dopamine, but also by epinephrine and norepinephrine, and by numerous synthetic agonists and drugs. Agonist binding triggers signaling via G proteins that inhibit adenylyl cyclase. Modulates the circadian rhythm of contrast sensitivity by regulating the rhythmic expression of NPAS2 in the retinal ganglion cells. In Mustela putorius furo (European domestic ferret), this protein is D(4) dopamine receptor (DRD4).